The primary structure comprises 126 residues: Protein ApaG (126 aa).

One can recognise an ApaG domain in the interval D2 to N126.

In Vibrio atlanticus (strain LGP32) (Vibrio splendidus (strain Mel32)), this protein is Protein ApaG.